The chain runs to 187 residues: Probable nicotinate-nucleotide adenylyltransferase (187 aa).

The protein belongs to the NadD family.

The catalysed reaction is nicotinate beta-D-ribonucleotide + ATP + H(+) = deamido-NAD(+) + diphosphate. The protein operates within cofactor biosynthesis; NAD(+) biosynthesis; deamido-NAD(+) from nicotinate D-ribonucleotide: step 1/1. Catalyzes the reversible adenylation of nicotinate mononucleotide (NaMN) to nicotinic acid adenine dinucleotide (NaAD). In Anaeromyxobacter sp. (strain K), this protein is Probable nicotinate-nucleotide adenylyltransferase.